The sequence spans 300 residues: Protoheme IX farnesyltransferase (300 aa).

Helical transmembrane passes span 24–44 (VTQLAVFCAVIGMFLATPGMV), 48–68 (VLIGGTVGIWLLAGAAFAINC), 94–114 (PQILLFSAVLGSIGAWTLYTF), 118–138 (LTMWLTIATFVGYAVIYTLLL), 146–166 (IVIGGASGAMPPALGWAAVTG), 172–192 (AWILVLIIFVWTPPHFWVLAL), 217–237 (LHILLYTVILFAVTLMPFISG), 239–259 (SGAVYLTSAVLLGAVFLAYAW), and 278–298 (IVYLSLLFAALLVDHYARPLL).

This sequence belongs to the UbiA prenyltransferase family. Protoheme IX farnesyltransferase subfamily.

It localises to the cell inner membrane. The catalysed reaction is heme b + (2E,6E)-farnesyl diphosphate + H2O = Fe(II)-heme o + diphosphate. It functions in the pathway porphyrin-containing compound metabolism; heme O biosynthesis; heme O from protoheme: step 1/1. Functionally, converts heme B (protoheme IX) to heme O by substitution of the vinyl group on carbon 2 of heme B porphyrin ring with a hydroxyethyl farnesyl side group. The sequence is that of Protoheme IX farnesyltransferase from Burkholderia vietnamiensis (strain G4 / LMG 22486) (Burkholderia cepacia (strain R1808)).